The sequence spans 280 residues: Keratin, type I cytoskeletal 47 kDa (280 aa).

A head region spans residues 1 to 81; it reads MSFRSSSSYS…SSSFSSFGGN (81 aa). The coil 1A stretch occupies residues 82–117; it reads DKQTMQNLNDRLASYLEKVRALEAANADLELKIREW. Residues 82 to 280 enclose the IF rod domain; that stretch reads DKQTMQNLND…RDAELWFNQK (199 aa). Residues 118–139 are linker 1; it reads YEKQKGSGIGAASKDFSKYFEI. A coil 1B region spans residues 140–231; that stretch reads ISDLRNKILF…KNHEEEMSIA (92 aa). Residues 232 to 254 are linker 12; it reads KGSAAGQVTVEMDAAPGVDLNKI. The interval 255-280 is coil 2; it reads LSDMRADYETLAEKNRRDAELWFNQK.

Belongs to the intermediate filament family. As to quaternary structure, heterotetramer of two type I and two type II keratins.

This is Keratin, type I cytoskeletal 47 kDa (xk81b1) from Xenopus laevis (African clawed frog).